The sequence spans 199 residues: Nucleoside triphosphate pyrophosphatase (199 aa).

Residue Asp-76 is the Proton acceptor of the active site.

Belongs to the Maf family. Requires a divalent metal cation as cofactor.

It is found in the cytoplasm. It carries out the reaction a ribonucleoside 5'-triphosphate + H2O = a ribonucleoside 5'-phosphate + diphosphate + H(+). The enzyme catalyses a 2'-deoxyribonucleoside 5'-triphosphate + H2O = a 2'-deoxyribonucleoside 5'-phosphate + diphosphate + H(+). Its function is as follows. Nucleoside triphosphate pyrophosphatase. May have a dual role in cell division arrest and in preventing the incorporation of modified nucleotides into cellular nucleic acids. The protein is Nucleoside triphosphate pyrophosphatase of Ruegeria pomeroyi (strain ATCC 700808 / DSM 15171 / DSS-3) (Silicibacter pomeroyi).